A 146-amino-acid chain; its full sequence is Lysozyme-like protein 4 (146 aa).

The signal sequence occupies residues 1 to 19; that stretch reads MKASVVLSLLGYLVVPSGA. Residues 20–146 enclose the C-type lysozyme domain; it reads YILGRCTVAK…LARWLDGCKL (127 aa). 4 disulfides stabilise this stretch: Cys25/Cys144, Cys49/Cys131, Cys84/Cys96, and Cys92/Cys110. The active site involves Glu54.

It belongs to the glycosyl hydrolase 22 family. Monomer. In terms of tissue distribution, expressed in testis and epididymis.

It localises to the secreted. It is found in the cytoplasmic vesicle. Its subcellular location is the secretory vesicle. The protein localises to the acrosome. The protein resides in the cell projection. It localises to the cilium. It is found in the flagellum. Functionally, may be involved in fertilization. Has no detectable bacteriolytic and lysozyme activities in vitro. In Homo sapiens (Human), this protein is Lysozyme-like protein 4 (LYZL4).